We begin with the raw amino-acid sequence, 463 residues long: Fumarate hydratase class II (463 aa).

Substrate contacts are provided by residues 98 to 100 (SGT), 129 to 132 (HPND), 139 to 141 (SSN), and Thr-187. The Proton donor/acceptor role is filled by His-188. The active site involves Ser-318. Substrate-binding positions include Ser-319 and 324–326 (KVN).

Belongs to the class-II fumarase/aspartase family. Fumarase subfamily. As to quaternary structure, homotetramer.

The protein resides in the cytoplasm. The enzyme catalyses (S)-malate = fumarate + H2O. The protein operates within carbohydrate metabolism; tricarboxylic acid cycle; (S)-malate from fumarate: step 1/1. Functionally, involved in the TCA cycle. Catalyzes the stereospecific interconversion of fumarate to L-malate. The polypeptide is Fumarate hydratase class II (Rickettsia bellii (strain RML369-C)).